Reading from the N-terminus, the 156-residue chain is ATP synthase subunit b (156 aa).

A helical transmembrane segment spans residues 11-31 (AIAFAIFVMFCMKFVWPPLIG).

This sequence belongs to the ATPase B chain family. In terms of assembly, F-type ATPases have 2 components, F(1) - the catalytic core - and F(0) - the membrane proton channel. F(1) has five subunits: alpha(3), beta(3), gamma(1), delta(1), epsilon(1). F(0) has three main subunits: a(1), b(2) and c(10-14). The alpha and beta chains form an alternating ring which encloses part of the gamma chain. F(1) is attached to F(0) by a central stalk formed by the gamma and epsilon chains, while a peripheral stalk is formed by the delta and b chains.

Its subcellular location is the cell inner membrane. Functionally, f(1)F(0) ATP synthase produces ATP from ADP in the presence of a proton or sodium gradient. F-type ATPases consist of two structural domains, F(1) containing the extramembraneous catalytic core and F(0) containing the membrane proton channel, linked together by a central stalk and a peripheral stalk. During catalysis, ATP synthesis in the catalytic domain of F(1) is coupled via a rotary mechanism of the central stalk subunits to proton translocation. Its function is as follows. Component of the F(0) channel, it forms part of the peripheral stalk, linking F(1) to F(0). This Psychrobacter cryohalolentis (strain ATCC BAA-1226 / DSM 17306 / VKM B-2378 / K5) protein is ATP synthase subunit b.